The sequence spans 494 residues: Ketol-acid reductoisomerase (NADP(+)) (494 aa).

The 195-residue stretch at 14-208 (LDQIGRCRFM…GGDRAGVLES (195 aa)) folds into the KARI N-terminal Rossmann domain. NADP(+) is bound by residues 45-48 (CGAQ), R68, R76, S78, and 108-110 (DKQ). H132 is a catalytic residue. G158 is an NADP(+) binding site. KARI C-terminal knotted domains follow at residues 209–344 (SFVA…NAPE) and 345–487 (YNGK…MTDM). Positions 217, 221, 389, and 393 each coordinate Mg(2+). S414 serves as a coordination point for substrate.

This sequence belongs to the ketol-acid reductoisomerase family. The cofactor is Mg(2+).

It carries out the reaction (2R)-2,3-dihydroxy-3-methylbutanoate + NADP(+) = (2S)-2-acetolactate + NADPH + H(+). It catalyses the reaction (2R,3R)-2,3-dihydroxy-3-methylpentanoate + NADP(+) = (S)-2-ethyl-2-hydroxy-3-oxobutanoate + NADPH + H(+). It functions in the pathway amino-acid biosynthesis; L-isoleucine biosynthesis; L-isoleucine from 2-oxobutanoate: step 2/4. It participates in amino-acid biosynthesis; L-valine biosynthesis; L-valine from pyruvate: step 2/4. In terms of biological role, involved in the biosynthesis of branched-chain amino acids (BCAA). Catalyzes an alkyl-migration followed by a ketol-acid reduction of (S)-2-acetolactate (S2AL) to yield (R)-2,3-dihydroxy-isovalerate. In the isomerase reaction, S2AL is rearranged via a Mg-dependent methyl migration to produce 3-hydroxy-3-methyl-2-ketobutyrate (HMKB). In the reductase reaction, this 2-ketoacid undergoes a metal-dependent reduction by NADPH to yield (R)-2,3-dihydroxy-isovalerate. This Pseudoalteromonas atlantica (strain T6c / ATCC BAA-1087) protein is Ketol-acid reductoisomerase (NADP(+)).